The following is an 85-amino-acid chain: MANHKSALKRIRANRAKYLRNRYQMKTTRTFVKRLRASTVKADANELYKKVSGMLDKLAKRNIIHKNNAANKKSKLAKFVNKLAA.

This sequence belongs to the bacterial ribosomal protein bS20 family.

In terms of biological role, binds directly to 16S ribosomal RNA. The polypeptide is Small ribosomal subunit protein bS20 (Cytophaga hutchinsonii (strain ATCC 33406 / DSM 1761 / CIP 103989 / NBRC 15051 / NCIMB 9469 / D465)).